Here is a 578-residue protein sequence, read N- to C-terminus: Proline--tRNA ligase (578 aa).

This sequence belongs to the class-II aminoacyl-tRNA synthetase family. ProS type 1 subfamily. In terms of assembly, homodimer.

Its subcellular location is the cytoplasm. The enzyme catalyses tRNA(Pro) + L-proline + ATP = L-prolyl-tRNA(Pro) + AMP + diphosphate. Its function is as follows. Catalyzes the attachment of proline to tRNA(Pro) in a two-step reaction: proline is first activated by ATP to form Pro-AMP and then transferred to the acceptor end of tRNA(Pro). As ProRS can inadvertently accommodate and process non-cognate amino acids such as alanine and cysteine, to avoid such errors it has two additional distinct editing activities against alanine. One activity is designated as 'pretransfer' editing and involves the tRNA(Pro)-independent hydrolysis of activated Ala-AMP. The other activity is designated 'posttransfer' editing and involves deacylation of mischarged Ala-tRNA(Pro). The misacylated Cys-tRNA(Pro) is not edited by ProRS. This Burkholderia pseudomallei (strain K96243) protein is Proline--tRNA ligase.